The sequence spans 121 residues: Large ribosomal subunit protein uL18 (121 aa).

This sequence belongs to the universal ribosomal protein uL18 family. As to quaternary structure, part of the 50S ribosomal subunit; part of the 5S rRNA/L5/L18/L25 subcomplex. Contacts the 5S and 23S rRNAs.

This is one of the proteins that bind and probably mediate the attachment of the 5S RNA into the large ribosomal subunit, where it forms part of the central protuberance. In Dehalococcoides mccartyi (strain ATCC BAA-2266 / KCTC 15142 / 195) (Dehalococcoides ethenogenes (strain 195)), this protein is Large ribosomal subunit protein uL18.